A 257-amino-acid polypeptide reads, in one-letter code: ATP synthase subunit a (257 aa).

6 helical membrane-spanning segments follow: residues 34-54 (ITNI…FSIL), 93-113 (YFPF…IGMV), 122-142 (HFIL…VLGF), 149-169 (FFSL…LVLI), 187-207 (ANIL…YNIM), and 210-230 (GIIF…FSGL).

This sequence belongs to the ATPase A chain family. As to quaternary structure, F-type ATPases have 2 components, CF(1) - the catalytic core - and CF(0) - the membrane proton channel. CF(1) has five subunits: alpha(3), beta(3), gamma(1), delta(1), epsilon(1). CF(0) has three main subunits: a, b and c.

Its subcellular location is the mitochondrion inner membrane. Functionally, mitochondrial membrane ATP synthase (F(1)F(0) ATP synthase or Complex V) produces ATP from ADP in the presence of a proton gradient across the membrane which is generated by electron transport complexes of the respiratory chain. F-type ATPases consist of two structural domains, F(1) - containing the extramembraneous catalytic core and F(0) - containing the membrane proton channel, linked together by a central stalk and a peripheral stalk. During catalysis, ATP synthesis in the catalytic domain of F(1) is coupled via a rotary mechanism of the central stalk subunits to proton translocation. Key component of the proton channel; it may play a direct role in the translocation of protons across the membrane. The polypeptide is ATP synthase subunit a (ATP6) (Cochliobolus heterostrophus (Southern corn leaf blight fungus)).